A 193-amino-acid polypeptide reads, in one-letter code: MTVRPIVIHGDPVLHNPTREVTEPISELQELIADMYETMEVANGVGLAANQIGVSKRIFVFNCPDDEGTMHRGCFINPVLETSEIPETMPADDGSDEEGCLSVPGEGFPTGRADWAKVTGLNEDGEEWSMEGTGFLARCFQHEVGHLDGVVYTDTLIGRWKRLAKKTIKANGWTEPGLTWTPGVDEDPFGHDV.

Fe cation contacts are provided by C100 and H142. The active site involves E143. H146 lines the Fe cation pocket.

The protein belongs to the polypeptide deformylase family. It depends on Fe(2+) as a cofactor.

It carries out the reaction N-terminal N-formyl-L-methionyl-[peptide] + H2O = N-terminal L-methionyl-[peptide] + formate. Functionally, removes the formyl group from the N-terminal Met of newly synthesized proteins. Requires at least a dipeptide for an efficient rate of reaction. N-terminal L-methionine is a prerequisite for activity but the enzyme has broad specificity at other positions. This chain is Peptide deformylase 2, found in Corynebacterium efficiens (strain DSM 44549 / YS-314 / AJ 12310 / JCM 11189 / NBRC 100395).